Consider the following 33-residue polypeptide: GLLDTFKNLALNAAKSAGVSVLNSLSCKLSKTC.

Residues cysteine 27 and cysteine 33 are joined by a disulfide bond.

As to expression, expressed by the skin glands.

It is found in the secreted. In terms of biological role, has antibacterial activity against E.coli ATCC 25992 (MIC=38 uM), E.coli CIB 84492 (MIC=38 uM), S.aureus ATCC 25923 (MIC=19 uM) and S.aureus CIB 85462 (MIC=19 uM). Has antifungal activity against C.albicans (MIC=19 uM). Has weak hemolytic activity against rabbit erythrocytes. This Odorrana jingdongensis (Jingdong frog) protein is Brevinin-2JD.